We begin with the raw amino-acid sequence, 563 residues long: BOS complex subunit NCLN (563 aa).

The first 42 residues, 1–42 (MLEEAGEVLENVLKASCLPLGFIVFLPAVLLLVAPPLPAADA), serve as a signal peptide directing secretion. Topologically, residues 43-522 (AHEFTVYRMQ…VMNAYRVKPA (480 aa)) are lumenal. 2 N-linked (GlcNAc...) asparagine glycosylation sites follow: asparagine 241 and asparagine 428. Residues 523–543 (IFDLLLALCIGAYLGMAYTAV) traverse the membrane as a helical segment. Topologically, residues 544-563 (QHFHVLYKTVQRLLLKAKAQ) are cytoplasmic.

The protein belongs to the nicastrin family. Component of the back of Sec61 (BOS) complex, composed of NCLN/Nicalin, NOMO1 and TMEM147. The BOS complex is part of the multi-pass translocon (MPT) complex, composed of three subcomplexes, the GEL complex (composed of RAB5IF/OPTI and TMCO1), the BOS complex (composed of NCLN/Nicalin, NOMO1 and TMEM147) and the PAT complex (composed of WDR83OS/Asterix and CCDC47). The MPT complex associates with the SEC61 complex.

It is found in the endoplasmic reticulum membrane. Component of the multi-pass translocon (MPT) complex that mediates insertion of multi-pass membrane proteins into the lipid bilayer of membranes. The MPT complex takes over after the SEC61 complex: following membrane insertion of the first few transmembrane segments of proteins by the SEC61 complex, the MPT complex occludes the lateral gate of the SEC61 complex to promote insertion of subsequent transmembrane regions. May antagonize Nodal signaling and subsequent organization of axial structures during mesodermal patterning, via its interaction with NOMO. The polypeptide is BOS complex subunit NCLN (Ncln) (Mus musculus (Mouse)).